A 278-amino-acid polypeptide reads, in one-letter code: Envelope glycoprotein L (278 aa).

The first 30 residues, 1-30 (MCRRPDCGFSFSPGPVILLWCCLLLPIVSS), serve as a signal peptide directing secretion. Residues 43–256 (VPAECPELTR…DKYYAGLPPE (214 aa)) enclose the gL betaherpesvirus-type domain. An intrachain disulfide couples Cys-154 to Cys-159.

The protein belongs to the herpesviridae glycoprotein L (gL) family. Betaherpesvirinae gL subfamily. In terms of assembly, interacts with glycoprotein H (gH); this interaction is necessary for the correct processing and cell surface expression of gH. Forms the envelope pentamer complex (PC) composed of gH, gL, UL128, UL130, and UL131A. The pentamer interacts with host NRP2. Forms the envelope trimer complex composed of gH, gL, and gO. The trimer interacts with host PDGFRA. The trimer also interacts with host EPHA2.

Its subcellular location is the virion membrane. It localises to the host cell membrane. The protein resides in the host Golgi apparatus. It is found in the host trans-Golgi network. Functionally, the heterodimer glycoprotein H-glycoprotein L is required for the fusion of viral and plasma membranes leading to virus entry into the host cell. Acts as a functional inhibitor of gH and maintains gH in an inhibited form. Upon binding to host integrins, gL dissociates from gH leading to activation of the viral fusion glycoproteins gB and gH. In human cytomegalovirus, forms two distincts complexes to mediate viral entry, a trimer and a pentamer at the surface of the virion envelope. The gH-gL-gO trimer is required for infection in fibroblasts by interacting with host PDGFRA, and in glioblastoma cells by interacting with host EPHA2. The gH-gL-UL128-UL130-UL131A pentamer is essential for viral entry in epithelial, endothelial and myeloid cells via interaction with host NRP2. The chain is Envelope glycoprotein L from Human cytomegalovirus (strain 5035) (HHV-5).